Here is a 261-residue protein sequence, read N- to C-terminus: Protein-ADP-ribose hydrolase (261 aa).

One can recognise a Macro domain in the interval 74–261; the sequence is ADLKPVTGRG…DEALYNKLMS (188 aa). The ADP-D-ribose site is built by Asp-93, Ile-94, and Asn-107. Cys-113, His-118, and Cys-120 together coordinate Zn(2+). Cys-120, Ile-121, Asp-122, Ser-211, Thr-212, Gly-213, and Phe-215 together coordinate ADP-D-ribose.

This sequence belongs to the MacroD-type family. Zn-Macro subfamily. Zn(2+) serves as cofactor.

The catalysed reaction is 4-O-(ADP-D-ribosyl)-L-aspartyl-[protein] + H2O = L-aspartyl-[protein] + ADP-D-ribose + H(+). Its function is as follows. ADP-ribosylhydrolase that specifically reverses the SirTM-mediated mono-ADP-ribosylation at an asparatate residue of GcvH-L, by releasing ADP-ribose from the target protein. May play a role in the regulation of the response to host-induced oxidative stress. The chain is Protein-ADP-ribose hydrolase from Treponema medium.